A 206-amino-acid chain; its full sequence is MKILVTAFDPFGGESINPSYEVLKNLKDNIEGAEIVKIQVPTVFYLSVEKAIEKIKEVNPDAVLSIGQAGGRYDISVERVAINIDDARIPDNIGQQPIDTPIDPEGAPAYFATIPIKEIVEEIKKENIPASISNTAGTYVCNHLMYGILNYIHKNKLNIKAGFIHIPYLPVQVLNKPSTPSMSLGDMVKAIETAIKVIVKSCKKSR.

Residues Glu-78, Cys-141, and His-165 contribute to the active site.

The protein belongs to the peptidase C15 family. Homotetramer.

The protein localises to the cytoplasm. It catalyses the reaction Release of an N-terminal pyroglutamyl group from a polypeptide, the second amino acid generally not being Pro.. In terms of biological role, removes 5-oxoproline from various penultimate amino acid residues except L-proline. The sequence is that of Pyrrolidone-carboxylate peptidase 2 from Caldanaerobacter subterraneus subsp. tengcongensis (strain DSM 15242 / JCM 11007 / NBRC 100824 / MB4) (Thermoanaerobacter tengcongensis).